Consider the following 275-residue polypeptide: Putative hydroxypyruvate isomerase (275 aa).

Active-site proton donor/acceptor residues include Glu147 and Glu246.

The protein belongs to the hyi family.

It carries out the reaction 3-hydroxypyruvate = 2-hydroxy-3-oxopropanoate. Functionally, catalyzes the reversible isomerization between hydroxypyruvate and 2-hydroxy-3-oxopropanoate (also termed tartronate semialdehyde). The sequence is that of Putative hydroxypyruvate isomerase (hyi) from Xenopus laevis (African clawed frog).